The following is a 585-amino-acid chain: MEPIVEQLKSRFDKALITAFGQDLVGTDPMIVSTTNPKFGDYQCNVAMSLAKKLKDKPKAIATQIINNLNINDYFYPPEIAGPGFINLSLKPEYIENCLETIIKDEKLNISPTKNPQRVVIDFSSPNIAKEMHVGHLRSTIIGDSLARVLEFQGHNVLRLNHVGDWGTQFGMLISYLREAFPEALKTADILDIGDLVAFYKQSKKRFDEDQDFQEKSRQEVVNLQTGAEDSRHAWELLCNQSRREFQVIYDLLDIKLNERGESFYNSMLPGIVEELNRLGLLEESDGAQCVFLSGFTNKEGEDVPLIVKKSDGGYNYATTDLAALVHRIEKEGATRLIYVTDAGQANHFSQVWQVAKKAGWIPENVEIVNVFFGLVLGEDGKKLKTRSGETVRLIDLLDEAINKARNDLEKRLKDEKRLESEEFIKNVAQVVGLSAVKYADLSQNRKSNYVFSFDKMLALQGNTAPYLLYAYVRVQGISRKGEINFEKLRKDAKIILQDEPELVLGKHLLKLNEVLNIVTIELLPNRLCEYLYELSEKFNKFFENCPVLKSEEPLRTSRLLLCDLTARTLKLGLYLLGISVLERM.

Residues 126 to 136 (PNIAKEMHVGH) carry the 'HIGH' region motif.

Belongs to the class-I aminoacyl-tRNA synthetase family. As to quaternary structure, monomer.

It localises to the cytoplasm. It catalyses the reaction tRNA(Arg) + L-arginine + ATP = L-arginyl-tRNA(Arg) + AMP + diphosphate. The sequence is that of Arginine--tRNA ligase from Trichodesmium erythraeum (strain IMS101).